The primary structure comprises 37 residues: Diptericin (37 aa).

Residues 1-37 (DLHIPPPDNKINWPQLSGGGGGSPKTGYDININAQQK) are disordered.

The protein belongs to the attacin/sarcotoxin-2 family. In terms of tissue distribution, synthesized by the fat body and secreted into the hemolymph.

The protein localises to the secreted. Functionally, acute phase protein with antibacterial activity against the Gram-negative bacteria E.coli (MIC=6.25 ug/ml) and S.sonnei (MIC=12.5 ug/ml). Lacks antibacterial activity against the Gram-negative bacteria P.vulgaris, P.rettgeri and P.aeruginosa, and against the Gram-positive bacteria B.subtilis, S.aureus, M.luteus, B.megaterium, C.bovis and E.cloacae. In Sarcophaga peregrina (Flesh fly), this protein is Diptericin.